The chain runs to 430 residues: Tol-Pal system protein TolB (430 aa).

The signal sequence occupies residues 1-21 (MKQALRVAFGFLILWASVLHA).

This sequence belongs to the TolB family. As to quaternary structure, the Tol-Pal system is composed of five core proteins: the inner membrane proteins TolA, TolQ and TolR, the periplasmic protein TolB and the outer membrane protein Pal. They form a network linking the inner and outer membranes and the peptidoglycan layer.

The protein resides in the periplasm. Its function is as follows. Part of the Tol-Pal system, which plays a role in outer membrane invagination during cell division and is important for maintaining outer membrane integrity. TolB occupies a key intermediary position in the Tol-Pal system because it communicates directly with both membrane-embedded components, Pal in the outer membrane and TolA in the inner membrane. The polypeptide is Tol-Pal system protein TolB (Shigella flexneri serotype 5b (strain 8401)).